Reading from the N-terminus, the 94-residue chain is uncharacterized protein (94 aa).

A signal peptide spans 1–19 (MKFSGLILGALALVSGAIA).

Belongs to the protease inhibitor I9 family.

This is an uncharacterized protein from Neurospora crassa (strain ATCC 24698 / 74-OR23-1A / CBS 708.71 / DSM 1257 / FGSC 987).